Reading from the N-terminus, the 290-residue chain is Aquaporin-3 (290 aa).

Over 1-24 (MGRQKELVTRCGEMLHIRYRLLRQ) the chain is Cytoplasmic. The chain crosses the membrane as a helical span at residues 25–42 (ALAECLGTLILVMFGCGS). The Extracellular portion of the chain corresponds to 43 to 56 (VAQVVLSRGTHGGF). The helical transmembrane segment at 57 to 74 (LTINLAFGFAVTLGILVA) threads the bilayer. The Cytoplasmic portion of the chain corresponds to 75–78 (GQVS). Residues 79–92 (GAHLNPAVTFAMCF) constitute an intramembrane region (discontinuously helical). Positions 83-85 (NPA) match the NPA 1 motif. Over 93 to 100 (LAREPWIK) the chain is Cytoplasmic. A helical transmembrane segment spans residues 101–121 (LPVYTLAQTLGAFLGAGIIFG). At 122 to 159 (LYYDAIWAFANNQLIVSGPNGTAGIFATYPSGHLDMVN) the chain is on the extracellular side. Asparagine 141 is a glycosylation site (N-linked (GlcNAc...) asparagine). A helical membrane pass occupies residues 160-177 (GFFDQFIGTASLIVCVLA). Residues 178–189 (IVDPNNNPVPRG) lie on the Cytoplasmic side of the membrane. A helical transmembrane segment spans residues 190-206 (LEAFTVGLVVLVIGTSM). Topologically, residues 207-210 (GFNS) are extracellular. The discontinuously helical intramembrane region spans 211–224 (GYAVNPARDFGPRL). The short motif at 215-217 (NPA) is the NPA 2 element. The Extracellular portion of the chain corresponds to 225–242 (FTAIAGWGSEVFTTGRHW). A helical membrane pass occupies residues 243–264 (WWVPIASPLLGSIAGVFVYQLM). The Cytoplasmic segment spans residues 265-290 (IGCHLEPPPPSTDEENVKLSQVKHKE).

This sequence belongs to the MIP/aquaporin (TC 1.A.8) family. In terms of assembly, homotetramer; each monomer provides an independent glycerol/water pore. Could also exist in other oligomeric states. In terms of tissue distribution, highly expressed in stomach and spleen, with lower expression in kidney and lung.

It localises to the cell membrane. Its subcellular location is the basolateral cell membrane. The catalysed reaction is glycerol(in) = glycerol(out). It catalyses the reaction H2O(in) = H2O(out). It carries out the reaction urea(in) = urea(out). The enzyme catalyses H2O2(out) = H2O2(in). In terms of biological role, aquaglyceroporins form homotetrameric transmembrane channels, with each monomer independently mediating glycerol and water transport across the plasma membrane along their osmotic gradient. Could also be permeable to urea. Also participates in cell permeability to H2O2 and H2O2-mediated signaling. In skin, transports glycerol to the epidermis and stratum corneum, where it maintains hydration, elasticity, and supports lipid biosynthesis for barrier repair. In kidney, contributes to the reabsorption of water, helping the body maintain proper fluid balance. The sequence is that of Aquaporin-3 from Sus scrofa (Pig).